Reading from the N-terminus, the 191-residue chain is Adenine phosphoribosyltransferase (191 aa).

Belongs to the purine/pyrimidine phosphoribosyltransferase family. As to quaternary structure, homodimer.

The protein localises to the cytoplasm. It carries out the reaction AMP + diphosphate = 5-phospho-alpha-D-ribose 1-diphosphate + adenine. The protein operates within purine metabolism; AMP biosynthesis via salvage pathway; AMP from adenine: step 1/1. Catalyzes a salvage reaction resulting in the formation of AMP, that is energically less costly than de novo synthesis. The chain is Adenine phosphoribosyltransferase from Clavibacter sepedonicus (Clavibacter michiganensis subsp. sepedonicus).